The sequence spans 236 residues: Purine nucleoside phosphorylase DeoD-type 2 (236 aa).

An a purine D-ribonucleoside-binding site is contributed by histidine 5. Residues glycine 21, arginine 25, arginine 44, and arginine 88 to serine 91 each bind phosphate. A purine D-ribonucleoside contacts are provided by residues aspartate 180–glutamate 182 and serine 204–aspartate 205. Residue aspartate 205 is the Proton donor of the active site.

Belongs to the PNP/UDP phosphorylase family. As to quaternary structure, homohexamer; trimer of homodimers.

It carries out the reaction a purine D-ribonucleoside + phosphate = a purine nucleobase + alpha-D-ribose 1-phosphate. The catalysed reaction is a purine 2'-deoxy-D-ribonucleoside + phosphate = a purine nucleobase + 2-deoxy-alpha-D-ribose 1-phosphate. Catalyzes the reversible phosphorolytic breakdown of the N-glycosidic bond in the beta-(deoxy)ribonucleoside molecules, with the formation of the corresponding free purine bases and pentose-1-phosphate. This is Purine nucleoside phosphorylase DeoD-type 2 from Vibrio cholerae serotype O1 (strain ATCC 39315 / El Tor Inaba N16961).